The sequence spans 441 residues: Leucine-rich repeat-containing protein 17 (441 aa).

The signal sequence occupies residues 1 to 18 (MRVVTIVILLCFCKAAEL). 3 LRR repeats span residues 82-103 (DLLH…MFSK), 106-127 (KLKS…AFFG), and 130-151 (KLTT…VFIY). The region spanning 163 to 214 (NPWHCTCEIETLISMLQIPRNRNLGNYAKCESPQEQKNKKLRQIKSEQLCNE) is the LRRCT 1 domain. In terms of domain architecture, LRRNT spans 225–268 (QVSGRPPVIKPEVDSTFCHNYVFPIQTLDCKRKELKKVPNNIPP). LRR repeat units follow at residues 269 to 290 (DIVK…EFED), 293 to 314 (ELKK…AFLG), and 317 to 340 (HLEE…EDLY). Residues 350-402 (NPWRCDYNIHYLYYWLKHHYNVHFNGLECKTPEEYKGWSVGKYIRSYYEECPK) enclose the LRRCT 2 domain.

As to expression, expressed in osteoblast cell lines. Well expressed in ovary, heart, pancreas, skeletal muscle, lung, and fetal kidney and lung and only at the basal levels in the other tissues examined including adult kidney. More expressed in S-type neuroblastoma cells than in N-type neuroblastoma cells.

It is found in the secreted. The protein localises to the extracellular space. In terms of biological role, involved in bone homeostasis. Acts as a negative regulator of RANKL-induced osteoclast precursor differentiation from bone marrow precursors. This is Leucine-rich repeat-containing protein 17 (LRRC17) from Homo sapiens (Human).